The chain runs to 1465 residues: MSLVTVPFYQKRHRHFDQSYRNIQTRYLLDEYASKKRASTQASSQKSLSQRSSSQRASSQTSLGGTICRVCAKRVSTQEDEEQENRSRYQSLVAAYGEAKRQRFLSELAHLEEDVHLARSQARDKLDKYAIQQMMEDKLAWERHTFEERISRAPEILVRLRSHTVWERMSVKLCFTVQGFPTPVVQWYKDGSLICQAAEPGKYRIESNYGVHTLEINRADFDDTATYSAVATNAHGQVSTNAAVVVRRFRGDEEPFRSVGLPIGLPLSSMIPYTHFDVQFLEKFGVTFRREGETVTLKCTMLVTPDLKRVQPRAEWYRDDVLLKESKWTKMFFGEGQASLSFSHLHKDDEGLYTLRIVSRGGVSDHSAFLFVRDADPLVTGAPGAPMDLQCHDANRDYVIVTWKPPNTTTESPVMGYFVDRCEVGTNNWVQCNDAPVKICKYPVTGLFEGRSYIFRVRAVNSAGISRPSRVSDAVAALDPLDLRRLQAVHLEGEKEIAIYQDDLEGDAQVPGPPTGVHASEISRNYVVLSWEPPTPRGKDPLMYFIEKSVVGSGSWQRVNAQTAVRSPRYAVFDLMEGKSYVFRVLSANRHGLSEPSEITSPIQAQDVTVVPSAPGRVLASRNTKTSVVVQWDRPKHEEDLLGYYVDCCVAGTNLWEPCNHKPIGYNRFVVHGLTTGEQYIFRVKAVNAVGMSENSQESDVIKVQAALTVPSHPYGITLLNCDGHSMTLGWKVPKFSGGSPILGYYLDKREVHHKNWHEVNSSPSKPTILTVDGLTEGSLYEFKIAAVNLAGIGEPSDPSEHFKCEAWTMPEPGPAYDLTFCEVRDTSLVMLWKAPVYSGSSPVSGYFVDFREEDAGEWITVNQTTTASRYLKVSDLQQGKTYVFRVRAVNANGVGKPSDTSEPVLVEARPGTKEISAGVDEQGNIYLGFDCQEMTDASQFTWCKSYEEISDDERFKIETVGDHSKLYLKNPDKEDLGTYSVSVSDTDGVSSSFVLDPEELERLMALSNEIKNPTIPLKSELAYEIFDKGRVRFWLQAEHLSPDASYRFIINDREVSDSEIHRIKCDKATGIIEMVMDRFSIENEGTYTVQIHDGKAKSQSSLVLIGDAFKTVLEEAEFQRKEFLRKQGPHFAEYLHWDVTEECEVRLVCKVANTKKETVFKWLKDDVLYETETLPNLERGICELLIPKLSKKDHGEYKATLKDDRGQDVSILEIAGKVYDDMILAMSRVCGKSASPLKVLCTPEGIRLQCFMKYFTDEMKVNWCHKDAKISSSEHMRIGGSEEMAWLQICEPTEKDKGKYTFEIFDGKDNHQRSLDLSGQAFDEAFAEFQQFKAAAFAEKNRGRLIGGLPDVVTIMEGKTLNLTCTVFGNPDPEVIWFKNDQDIQLSEHFSVKVEQAKYVSMTIKGVTSEDSGKYSINIKNKYGGEKIDVTVSVYKHGEKIPDMAPPQQAKPKLIPASASAAGQ.

The segment at 38–61 (ASTQASSQKSLSQRSSSQRASSQT) is disordered. A compositionally biased stretch (low complexity) spans 41-61 (QASSQKSLSQRSSSQRASSQT). 2 Ig-like C2-type domains span residues 154–245 (PEIL…AAVV) and 266–371 (PLSS…AFLF). Fibronectin type-III domains follow at residues 385–480 (APMD…ALDP), 513–608 (PPTG…AQDV), 614–707 (APGR…VQAA), 710–812 (VPSH…TMPE), and 815–912 (PAYD…ARPG). 3 consecutive Ig-like C2-type domains span residues 904-1002 (PVLV…EELE), 1130-1211 (PHFA…QDVS), and 1345-1434 (RLIG…VTVS). The disordered stretch occupies residues 1442–1465 (IPDMAPPQQAKPKLIPASASAAGQ).

Interacts with TTN/titin.

The protein resides in the cytoplasm. The protein localises to the myofibril. It is found in the sarcomere. It localises to the m line. Functionally, major component of the vertebrate myofibrillar M band. Binds myosin, titin, and light meromyosin. This binding is dose dependent. This Homo sapiens (Human) protein is Myomesin-2 (MYOM2).